Reading from the N-terminus, the 90-residue chain is Probable Fe(2+)-trafficking protein (90 aa).

The protein belongs to the Fe(2+)-trafficking protein family.

In terms of biological role, could be a mediator in iron transactions between iron acquisition and iron-requiring processes, such as synthesis and/or repair of Fe-S clusters in biosynthetic enzymes. This Pseudomonas fluorescens (strain ATCC BAA-477 / NRRL B-23932 / Pf-5) protein is Probable Fe(2+)-trafficking protein.